A 354-amino-acid polypeptide reads, in one-letter code: Uroporphyrinogen decarboxylase (354 aa).

Residues 27–31 (RQAGR), Asp-77, Tyr-154, Thr-209, and His-327 each bind substrate.

It belongs to the uroporphyrinogen decarboxylase family. As to quaternary structure, homodimer.

It localises to the cytoplasm. The catalysed reaction is uroporphyrinogen III + 4 H(+) = coproporphyrinogen III + 4 CO2. It functions in the pathway porphyrin-containing compound metabolism; protoporphyrin-IX biosynthesis; coproporphyrinogen-III from 5-aminolevulinate: step 4/4. Its function is as follows. Catalyzes the decarboxylation of four acetate groups of uroporphyrinogen-III to yield coproporphyrinogen-III. This is Uroporphyrinogen decarboxylase from Histophilus somni (strain 129Pt) (Haemophilus somnus).